The primary structure comprises 395 residues: MFGTVNNYLSGVLHAAQDLDGESLATYLSLRDVHVQNHNLYIAQPEKLVDRFLKPPLDEVVSAHLKVLYHLAQEPPGYMEAYTQQSAACGAVVRLLQQLKDENWCLPLMYRVCLDLRYLAQACEKHCQGFTPGHVLEKAADCIMACFRVCAADGRASEEDTKRLGMMNLVNQLFKIYFRINKLHLCKPLIRAIDNCIFKDSFPLPEQITYKYFVGRRAMFDSNYQAAVQYLSYAFSNCPDRFASNKRLILIYLVPVKMLLGYLPSKSLLQRYDLLLFLDLAMAMKAGNVNRFDEIVRDQELVLIRSGIYLLVEKLKFLVYRNLFKKVFVIRKSHQLDMGDFLSALHFVGLTDVSLDETHCIVANLIYDGKIKGYISHAHNKLVVSKQNPFPSVSL.

Residues 208–389 (ITYKYFVGRR…NKLVVSKQNP (182 aa)) form the PCI domain.

This sequence belongs to the CSN12 family. Component of the nuclear pore complex (NPC)-associated TREX-2/AMEX complex (anchoring and mRNA export complex), composed of e(y)2, xmas and PCID2. Interaction between the TREX-2/AMEX complex and the ORC complex is required for ORC localization to mRNPs, and consequently mRNA export. Within the TREX-2/AMEX-ORC complex, interacts with Orc3 and Orc4. Interacts with sbr/NXF1. Interacts with Moe. Interacts with nudC; required to maintain stability in the cytoplasm. Mono- and poly-ubiquitinated.

It localises to the nucleus. It is found in the cytoplasm. The protein localises to the nucleus membrane. Its subcellular location is the cytoskeleton. Its function is as follows. Required for the export of nuclear mRNAs and involved in mRNA trafficking in the cytoplasm. Component of the nuclear pore complex (NPC)-associated TREX-2/AMEX complex (anchoring and mRNA export complex) which functions in docking export-competent ribonucleoprotein particles (mRNPs) to the nuclear entrance of the nuclear pore complex (nuclear basket), thereby enabling the export of mRNAs to the cytoplasm through the nuclear pores. Within the complex, specifically promotes the association of factors involved in regulating nuclear mRNA export, such as Moe, sbr/NXF1 and the ORC complex, to the mRNPs particles. In the cytoplasm, functions independently of its role in the TREX-2/AMEX complex, to promote cytoplasmic mRNA trafficking together with nudC. Associates with translationally active polysomes. This Drosophila melanogaster (Fruit fly) protein is PCI domain-containing protein 2 homolog.